A 286-amino-acid polypeptide reads, in one-letter code: Pyridoxal kinase PdxY (286 aa).

Residues serine 9 and 44–45 (TQ) contribute to the substrate site. ATP-binding positions include aspartate 111, alanine 143, glutamate 148, lysine 181, and 208 to 211 (RPLV). A substrate-binding site is contributed by aspartate 223.

This sequence belongs to the pyridoxine kinase family. PdxY subfamily. Homodimer. Mg(2+) serves as cofactor.

It catalyses the reaction pyridoxal + ATP = pyridoxal 5'-phosphate + ADP + H(+). Its pathway is cofactor metabolism; pyridoxal 5'-phosphate salvage; pyridoxal 5'-phosphate from pyridoxal: step 1/1. Functionally, pyridoxal kinase involved in the salvage pathway of pyridoxal 5'-phosphate (PLP). Catalyzes the phosphorylation of pyridoxal to PLP. This chain is Pyridoxal kinase PdxY, found in Yersinia pestis bv. Antiqua (strain Antiqua).